The primary structure comprises 354 residues: Methylthioribose-1-phosphate isomerase (354 aa).

Residues 58–60 (RGA), arginine 101, and glutamine 204 each bind substrate. The Proton donor role is filled by aspartate 245. 255–256 (NK) provides a ligand contact to substrate.

It belongs to the eIF-2B alpha/beta/delta subunits family. MtnA subfamily.

It catalyses the reaction 5-(methylsulfanyl)-alpha-D-ribose 1-phosphate = 5-(methylsulfanyl)-D-ribulose 1-phosphate. Its pathway is amino-acid biosynthesis; L-methionine biosynthesis via salvage pathway; L-methionine from S-methyl-5-thio-alpha-D-ribose 1-phosphate: step 1/6. Functionally, catalyzes the interconversion of methylthioribose-1-phosphate (MTR-1-P) into methylthioribulose-1-phosphate (MTRu-1-P). This is Methylthioribose-1-phosphate isomerase from Xanthomonas campestris pv. campestris (strain ATCC 33913 / DSM 3586 / NCPPB 528 / LMG 568 / P 25).